The sequence spans 209 residues: ATP-dependent Clp protease proteolytic subunit (209 aa).

Ser106 (nucleophile) is an active-site residue. His131 is a catalytic residue.

The protein belongs to the peptidase S14 family. Fourteen ClpP subunits assemble into 2 heptameric rings which stack back to back to give a disk-like structure with a central cavity, resembling the structure of eukaryotic proteasomes.

It is found in the cytoplasm. The catalysed reaction is Hydrolysis of proteins to small peptides in the presence of ATP and magnesium. alpha-casein is the usual test substrate. In the absence of ATP, only oligopeptides shorter than five residues are hydrolyzed (such as succinyl-Leu-Tyr-|-NHMec, and Leu-Tyr-Leu-|-Tyr-Trp, in which cleavage of the -Tyr-|-Leu- and -Tyr-|-Trp bonds also occurs).. Cleaves peptides in various proteins in a process that requires ATP hydrolysis. Has a chymotrypsin-like activity. Plays a major role in the degradation of misfolded proteins. In Brucella melitensis biotype 2 (strain ATCC 23457), this protein is ATP-dependent Clp protease proteolytic subunit.